The chain runs to 500 residues: ATP synthase subunit alpha (500 aa).

ATP is bound at residue 169–176 (GDRQTGKT).

It belongs to the ATPase alpha/beta chains family. In terms of assembly, F-type ATPases have 2 components, CF(1) - the catalytic core - and CF(0) - the membrane proton channel. CF(1) has five subunits: alpha(3), beta(3), gamma(1), delta(1), epsilon(1). CF(0) has three main subunits: a(1), b(2) and c(9-12). The alpha and beta chains form an alternating ring which encloses part of the gamma chain. CF(1) is attached to CF(0) by a central stalk formed by the gamma and epsilon chains, while a peripheral stalk is formed by the delta and b chains.

The protein localises to the cell membrane. The enzyme catalyses ATP + H2O + 4 H(+)(in) = ADP + phosphate + 5 H(+)(out). Produces ATP from ADP in the presence of a proton gradient across the membrane. The alpha chain is a regulatory subunit. This chain is ATP synthase subunit alpha, found in Lactococcus lactis subsp. cremoris (strain SK11).